The following is a 547-amino-acid chain: TBCC domain-containing protein 1 (547 aa).

The C-CAP/cofactor C-like domain maps to 304–435 (PHTHRMVVMS…LEDHMAHTGL (132 aa)).

Belongs to the TBCC family.

It localises to the cytoplasm. It is found in the cytoskeleton. The protein localises to the microtubule organizing center. Its subcellular location is the centrosome. The protein resides in the spindle pole. Its function is as follows. May play a role in the regulation of centrosome and Golgi apparatus positioning. The protein is TBCC domain-containing protein 1 (tbccd1) of Xenopus tropicalis (Western clawed frog).